The chain runs to 545 residues: Thermosome subunit alpha (545 aa).

The interval 522–545 (KKSTPPSGQGGQGQGMPGGGMPEY) is disordered. The segment covering 529–545 (GQGGQGQGMPGGGMPEY) has biased composition (gly residues).

The protein belongs to the TCP-1 chaperonin family. Forms a Heterooligomeric complex of two stacked eight-membered rings. In terms of processing, the N-terminus is blocked.

Its function is as follows. Molecular chaperone; binds unfolded polypeptides in vitro, and has a weak ATPase activity. In Thermoplasma acidophilum (strain ATCC 25905 / DSM 1728 / JCM 9062 / NBRC 15155 / AMRC-C165), this protein is Thermosome subunit alpha (thsA).